Here is a 150-residue protein sequence, read N- to C-terminus: Ribosomal RNA large subunit methyltransferase H (150 aa).

S-adenosyl-L-methionine-binding positions include Leu68, Gly97, and 116–121 (LSAMTL).

This sequence belongs to the RNA methyltransferase RlmH family. As to quaternary structure, homodimer.

It localises to the cytoplasm. The enzyme catalyses pseudouridine(1915) in 23S rRNA + S-adenosyl-L-methionine = N(3)-methylpseudouridine(1915) in 23S rRNA + S-adenosyl-L-homocysteine + H(+). Its function is as follows. Specifically methylates the pseudouridine at position 1915 (m3Psi1915) in 23S rRNA. The sequence is that of Ribosomal RNA large subunit methyltransferase H from Prochlorococcus marinus (strain MIT 9303).